A 249-amino-acid chain; its full sequence is Cilia- and flagella-associated protein 410 (249 aa).

LRR repeat units lie at residues 19 to 40 (NVRKLNCWGSQLTDISICREMP), 41 to 62 (SLEVITLSVNSVSTLEPVRSCR), and 63 to 84 (RLSELYLRRNRIPSLNELFYLK). One can recognise an LRRCT domain in the interval 97–137 (NPCCGTSPHLYRMTVLRNLPHLQKLDNQAVTEEELTRALME). The segment at 146–203 (HREGAGNGCPKPPYALNSVSSATETSQHLLSYTEETEVQGQTTTDQSPSFSPRDTMRS) is disordered. Residues 162–175 (NSVSSATETSQHLL) show a composition bias toward polar residues.

In terms of assembly, found in a complex with CFAP410, NEK1 and SPATA7. Interacts with NEK1. As to expression, expressed in the retina.

The protein localises to the cell projection. It localises to the cilium. The protein resides in the cytoplasm. It is found in the cytoskeleton. Its subcellular location is the cilium basal body. The protein localises to the mitochondrion. It localises to the photoreceptor outer segment. Functionally, plays a role in cilia formation and/or maintenance. Plays a role in the regulation of cell morphology and cytoskeletal organization. Involved in DNA damage repair. This is Cilia- and flagella-associated protein 410 from Mus musculus (Mouse).